We begin with the raw amino-acid sequence, 919 residues long: MTAEETVNVKEVEIIKLILDFLNSKKLHISMLALEKESGVINGLFSDDMLFLRQLILDGQWDEVLQFIQPLECMEKFDKKRFRYIILKQKFLEALCVNNAMSAEDEPQHLEFTMQEAVQCLHALEEYCPSKDDYSKLCLLLTLPRLTNHAEFKDWNPSTARVHCFEEACVMVAEFIPADRKLSEAGFKASNNRLFQLVMKGLLYECCVEFCQSKATGEEITESEVLLGIDLLCGNGCDDLDLSLLSWLQNLPSSVFSCAFEQKMLNIHVDKLLKPTKAAYADLLTPLISKLSPYPSSPMRRPQSADAYMTRSLNPALDGLTCGLTSHDKRISDLGNKTSPMSHSFANFHYPGVQNLSRSLMLENTECHSIYEESPERDTPVDAQRPIGSEILGQSSVSEKEPANGAQNPGPAKQEKNELRDSTEQFQEYYRQRLRYQQHLEQKEQQRQIYQQMLLEGGVNQEDGPDQQQNLTEQFLNRSIQKLGELNIGMDGLGNEVSALNQQCNGSKGNGSNGSSVTSFTTPPQDSSQRLTHDASNIHTSTPRNPGSTNHIPFLEESPCGSQISSEHSVIKPPLGDSPGSLSRSKGEEDDKSKKQFVCINILEDTQAVRAVAFHPAGGLYAVGSNSKTLRVCAYPDVIDPSAHETPKQPVVRFKRNKHHKGSIYCVAWSPCGQLLATGSNDKYVKVLPFNAETCNATGPDLEFSMHDGTIRDLAFMEGPESGGAILISAGAGDCNIYTTDCQRGQGLHALSGHTGHILALYTWSGWMIASGSQDKTVRFWDLRVPSCVRVVGTTFHGTGSAVASVAVDPSGRLLATGQEDSSCMLYDIRGGRMVQSYHPHSSDVRSVRFSPGAHYLLTGSYDMKIKVTDLQGDLTKQLPIMVVGEHKDKVIQCRWHTQDLSFLSSSADRTVTLWTYNG.

The region spanning 10 to 42 (KEVEIIKLILDFLNSKKLHISMLALEKESGVIN) is the LisH domain. The CTLH domain occupies 45 to 102 (FSDDMLFLRQLILDGQWDEVLQFIQPLECMEKFDKKRFRYIILKQKFLEALCVNNAMS). Phosphothreonine is present on threonine 285. Serine 289, serine 292, serine 297, and serine 312 each carry phosphoserine. Residues 393–421 (GQSSVSEKEPANGAQNPGPAKQEKNELRD) form a disordered region. Serine 422 carries the post-translational modification Phosphoserine. Residues 500–590 (LNQQCNGSKG…SLSRSKGEED (91 aa)) form a disordered region. Polar residues predominate over residues 517–551 (VTSFTTPPQDSSQRLTHDASNIHTSTPRNPGSTNH). A Phosphothreonine modification is found at threonine 542. WD repeat units lie at residues 604–643 (EDTQ…DPSA), 659–698 (HHKG…CNAT), 706–748 (MHDG…GQGL), 753–791 (GHTG…CVRV), 798–837 (GTGS…MVQS), 840–879 (PHSS…TKQL), and 886–918 (EHKD…WTYN).

As to quaternary structure, interacts with MAP1S (via WD repeats).

It is found in the cytoplasm. The protein resides in the cytoskeleton. This is WD repeat-containing protein 47 (WDR47) from Homo sapiens (Human).